The primary structure comprises 2055 residues: Dedicator of cytokinesis protein 9 (2055 aa).

A phosphoserine mark is found at S178 and S181. In terms of domain architecture, PH spans 185–292; it reads GITKHGWLYK…WVTVLNKILQ (108 aa). Residues 301–326 form a disordered region; sequence EKRNGDPHEDDEQSKLEGSGSGLDSY. A phosphoserine mark is found at S444 and S453. The 179-residue stretch at 649-827 folds into the C2 DOCK-type domain; it reads SNHLYVYPKY…PLLKISTHLV (179 aa). A phosphoserine mark is found at S936 and S1244. A Phosphothreonine modification is found at T1250. The segment at 1253-1291 is disordered; that stretch reads INSVRNADSRGSLISTDSGNSLPDRNPEKSNSLDKQQQS. Residues S1264, S1270, and S1273 each carry the phosphoserine modification. Polar residues predominate over residues 1264-1276; the sequence is SLISTDSGNSLPD. Residues 1614–2055 enclose the DOCKER domain; sequence KSYASTPELR…LSDIMREQMG (442 aa). The interaction with CDC42 stretch occupies residues 1679–2055; that stretch reads DEEASMMEDV…LSDIMREQMG (377 aa).

The protein belongs to the DOCK family. Homodimer. Interacts preferentially with nucleotide-depleted CDC42. In terms of tissue distribution, expressed in lung. Also detected in Peyers patches, thymus, brain and lymph nodes. Expressed in Purkinje cells.

It is found in the endomembrane system. Its function is as follows. Guanine nucleotide-exchange factor (GEF) that activates CDC42 by exchanging bound GDP for free GTP. Overexpression induces filopodia formation. This is Dedicator of cytokinesis protein 9 from Mus musculus (Mouse).